A 368-amino-acid chain; its full sequence is uncharacterized protein (368 aa).

This sequence belongs to the CdaR family.

This is an uncharacterized protein from Haemophilus influenzae (strain ATCC 51907 / DSM 11121 / KW20 / Rd).